The chain runs to 50 residues: PsaJ-like protein asl3190 (50 aa).

The chain crosses the membrane as a helical span at residues 21–41; the sequence is VLAVISISVAFSTWAIFNYIF.

The protein belongs to the PsaJ family.

It is found in the cellular thylakoid membrane. The sequence is that of PsaJ-like protein asl3190 from Nostoc sp. (strain PCC 7120 / SAG 25.82 / UTEX 2576).